Consider the following 289-residue polypeptide: Ribosomal protein L11 methyltransferase (289 aa).

The S-adenosyl-L-methionine site is built by Thr135, Gly156, Asp179, and Asn225.

Belongs to the methyltransferase superfamily. PrmA family.

It localises to the cytoplasm. The catalysed reaction is L-lysyl-[protein] + 3 S-adenosyl-L-methionine = N(6),N(6),N(6)-trimethyl-L-lysyl-[protein] + 3 S-adenosyl-L-homocysteine + 3 H(+). In terms of biological role, methylates ribosomal protein L11. The protein is Ribosomal protein L11 methyltransferase of Chlorobaculum parvum (strain DSM 263 / NCIMB 8327) (Chlorobium vibrioforme subsp. thiosulfatophilum).